Reading from the N-terminus, the 384-residue chain is Tetraacyldisaccharide 4'-kinase (384 aa).

Residue 72–79 (TAGGTGKT) coordinates ATP.

This sequence belongs to the LpxK family.

The catalysed reaction is a lipid A disaccharide + ATP = a lipid IVA + ADP + H(+). It functions in the pathway glycolipid biosynthesis; lipid IV(A) biosynthesis; lipid IV(A) from (3R)-3-hydroxytetradecanoyl-[acyl-carrier-protein] and UDP-N-acetyl-alpha-D-glucosamine: step 6/6. Transfers the gamma-phosphate of ATP to the 4'-position of a tetraacyldisaccharide 1-phosphate intermediate (termed DS-1-P) to form tetraacyldisaccharide 1,4'-bis-phosphate (lipid IVA). This Halothermothrix orenii (strain H 168 / OCM 544 / DSM 9562) protein is Tetraacyldisaccharide 4'-kinase.